Reading from the N-terminus, the 778-residue chain is DNA repair protein crb2 (778 aa).

Residues 35-56 form a disordered region; sequence KVNASINPSPPRSNDNSNKEFS. Position 73 is a phosphothreonine; by ATM (Thr-73). At Ser-80 the chain carries Phosphoserine; by ATM. Positions 141–245 are interaction with rad4; sequence VSNSSQILSP…PPAFLPETSE (105 aa). Thr-187 carries the post-translational modification Phosphothreonine. Thr-215 bears the Phosphothreonine; by cdc2 mark. Thr-235 is modified (phosphothreonine). The tudor-like stretch occupies residues 358 to 493; the sequence is SRRSFKNRVL…RRFQGRDLSF (136 aa). Residues 370–404 form an interaction with dimethylated histone H4 region; that stretch reads FKGYPSFYYPATLVAPVHSAVTSSIMYKVQFDDAT. Residues 535-653 enclose the BRCT domain; it reads SNQLIFDDCV…RVVDFSPYLL (119 aa).

As to quaternary structure, homodimer. Dimerization is mediated via the BRCT domain. Interacts (via BRCT domain) with rad3. Interacts with rad4 (via BRCT1,2 domains); a single rad4 molecule interacts simultaneously with both Thr-187 phosphorylation sites in a crb2 dimer. Interacts (via Tudor domain) with histone H4K20me2. Interacts (via BRCT dmain) with histone H2AS128ph (gamma-H2A). Interacts with chk1. Interacts with sad1. Post-translationally, phosphorylation of Thr-73 and Ser-80 by rad3/ATM promotes interaction with chk1. Phosphorylation at Thr-187 is dependent on phosphorylation at Thr-215 and Thr-235. Phosphorylation at Thr-215 and Thr-235 may prime the non-canonical Thr-187 site for cdc2/CDK phosphorylation.

It is found in the nucleus. Functionally, essential for cell cycle arrest at the G1 and G2 stages following DNA damage by X-, and UV-irradiation, or inactivation of DNA ligase. Plays a role in the response to DNA damage. Interaction with rad4 via its phosphorylation sites in the N-terminus couples the DNA checkpoint apparatus to chromatin via interaction of its C-terminal BRCT domains with epigenetic modifications on histones H4 and H2A, respectively, in the G1/S phase of the cell cycle, and facilitates recruitment of the checkpoint kinase chk1. This is DNA repair protein crb2 from Schizosaccharomyces pombe (strain 972 / ATCC 24843) (Fission yeast).